A 213-amino-acid polypeptide reads, in one-letter code: Thiamine-phosphate synthase (213 aa).

4-amino-2-methyl-5-(diphosphooxymethyl)pyrimidine contacts are provided by residues Q38–K42 and D70. Mg(2+) contacts are provided by D71 and E90. Residue S109 participates in 4-amino-2-methyl-5-(diphosphooxymethyl)pyrimidine binding. T135–T137 is a binding site for 2-[(2R,5Z)-2-carboxy-4-methylthiazol-5(2H)-ylidene]ethyl phosphate. Residue K138 participates in 4-amino-2-methyl-5-(diphosphooxymethyl)pyrimidine binding. 2-[(2R,5Z)-2-carboxy-4-methylthiazol-5(2H)-ylidene]ethyl phosphate contacts are provided by residues G165 and V185–S186.

The protein belongs to the thiamine-phosphate synthase family. The cofactor is Mg(2+).

It catalyses the reaction 2-[(2R,5Z)-2-carboxy-4-methylthiazol-5(2H)-ylidene]ethyl phosphate + 4-amino-2-methyl-5-(diphosphooxymethyl)pyrimidine + 2 H(+) = thiamine phosphate + CO2 + diphosphate. The catalysed reaction is 2-(2-carboxy-4-methylthiazol-5-yl)ethyl phosphate + 4-amino-2-methyl-5-(diphosphooxymethyl)pyrimidine + 2 H(+) = thiamine phosphate + CO2 + diphosphate. It carries out the reaction 4-methyl-5-(2-phosphooxyethyl)-thiazole + 4-amino-2-methyl-5-(diphosphooxymethyl)pyrimidine + H(+) = thiamine phosphate + diphosphate. The protein operates within cofactor biosynthesis; thiamine diphosphate biosynthesis; thiamine phosphate from 4-amino-2-methyl-5-diphosphomethylpyrimidine and 4-methyl-5-(2-phosphoethyl)-thiazole: step 1/1. Its function is as follows. Condenses 4-methyl-5-(beta-hydroxyethyl)thiazole monophosphate (THZ-P) and 2-methyl-4-amino-5-hydroxymethyl pyrimidine pyrophosphate (HMP-PP) to form thiamine monophosphate (TMP). The protein is Thiamine-phosphate synthase of Lacticaseibacillus paracasei (strain ATCC 334 / BCRC 17002 / CCUG 31169 / CIP 107868 / KCTC 3260 / NRRL B-441) (Lactobacillus paracasei).